Here is a 202-residue protein sequence, read N- to C-terminus: N-(5'-phosphoribosyl)anthranilate isomerase (202 aa).

It belongs to the TrpF family.

The catalysed reaction is N-(5-phospho-beta-D-ribosyl)anthranilate = 1-(2-carboxyphenylamino)-1-deoxy-D-ribulose 5-phosphate. It participates in amino-acid biosynthesis; L-tryptophan biosynthesis; L-tryptophan from chorismate: step 3/5. The protein is N-(5'-phosphoribosyl)anthranilate isomerase of Listeria monocytogenes serotype 4a (strain HCC23).